A 474-amino-acid chain; its full sequence is tRNA-2-methylthio-N(6)-dimethylallyladenosine synthase (474 aa).

The MTTase N-terminal domain occupies 3 to 120; that stretch reads KKLLIKTWGC…LPEMIKQSQS (118 aa). Positions 12, 49, 83, 157, 161, and 164 each coordinate [4Fe-4S] cluster. Positions 143 to 375 constitute a Radical SAM core domain; sequence RAEGATAFVS…QQTVNTQAMR (233 aa). The TRAM domain maps to 378–441; it reads RQMLDTEQRV…ANSLRGELVR (64 aa).

The protein belongs to the methylthiotransferase family. MiaB subfamily. Monomer. [4Fe-4S] cluster is required as a cofactor.

It localises to the cytoplasm. The enzyme catalyses N(6)-dimethylallyladenosine(37) in tRNA + (sulfur carrier)-SH + AH2 + 2 S-adenosyl-L-methionine = 2-methylsulfanyl-N(6)-dimethylallyladenosine(37) in tRNA + (sulfur carrier)-H + 5'-deoxyadenosine + L-methionine + A + S-adenosyl-L-homocysteine + 2 H(+). Functionally, catalyzes the methylthiolation of N6-(dimethylallyl)adenosine (i(6)A), leading to the formation of 2-methylthio-N6-(dimethylallyl)adenosine (ms(2)i(6)A) at position 37 in tRNAs that read codons beginning with uridine. The sequence is that of tRNA-2-methylthio-N(6)-dimethylallyladenosine synthase from Vibrio campbellii (strain ATCC BAA-1116).